Reading from the N-terminus, the 133-residue chain is UPF0225 protein BB3385 (133 aa).

It belongs to the UPF0225 family.

The protein is UPF0225 protein BB3385 of Bordetella bronchiseptica (strain ATCC BAA-588 / NCTC 13252 / RB50) (Alcaligenes bronchisepticus).